The chain runs to 313 residues: Alpha-S1-casein (313 aa).

Residues 1 to 15 form the signal peptide; sequence MKLLILTCLVAAAFA. The span at 77 to 96 shows a compositional bias: low complexity; that stretch reads ASEEQAMASAQEDSSISSSS. The segment at 77-111 is disordered; the sequence is ASEEQAMASAQEDSSISSSSEESEEAIPNITEQKN. A phosphoserine mark is found at Ser-90, Ser-91, Ser-93, Ser-94, Ser-95, and Ser-96. 15 tandem repeats follow at residues 135–140, 141–146, 147–152, 153–158, 159–164, 165–170, 171–176, 177–182, 183–188, 189–194, 195–200, 201–206, 207–212, 213–218, and 219–224. A 15 X 6 AA tandem repeats region spans residues 135 to 224; it reads LLQKASLAKQ…QQASLAQKHH (90 aa).

The protein belongs to the alpha-casein family. Mammary gland specific. Secreted in milk.

It localises to the secreted. Its function is as follows. Important role in the capacity of milk to transport calcium phosphate. The protein is Alpha-S1-casein (Csn1s1) of Mus musculus (Mouse).